The chain runs to 394 residues: Class II hydrophobin TH1 (394 aa).

The signal sequence occupies residues 1-16; that stretch reads MKFLAAASLLVASTLA. Positions 17 to 42 are disordered; it reads VPTSSGGSCRPRPPPGGGNGGNGGNG. Positions 33-42 are enriched in gly residues; sequence GGNGGNGGNG. The hydrophobin 1 stretch occupies residues 48–117; it reads GYQPCPAGLY…GQAVLCQDSI (70 aa). 4 disulfides stabilise this stretch: cysteine 52/cysteine 101, cysteine 62/cysteine 92, cysteine 63/cysteine 75, and cysteine 102/cysteine 113. Residues 135–157 are disordered; that stretch reads GNGGNNGGNTDYPGGNGGNNGGN. Residues 148 to 157 are compositionally biased toward gly residues; that stretch reads GGNGGNNGGN. Hydrophobin stretches follow at residues 200–270 and 326–394; these read GYQA…QPAI and GSFK…CTGA.

This sequence belongs to the cerato-ulmin hydrophobin family. As to quaternary structure, homotetramer. Further self-assembles to form highly ordered films at water-air interfaces through intermolecular interactions. In terms of processing, several N-termini starting at positions 17, 20, 22, 28 and 48 have been identified by direct sequencing. Post-translationally, contains a number of intrachain disulfide bonds. Not glycosylated.

The protein resides in the secreted. It localises to the cell wall. Its function is as follows. Aerial growth, conidiation, and dispersal of filamentous fungi in the environment rely upon a capability of their secreting small amphipathic proteins called hydrophobins (HPBs) with low sequence identity. Class I can self-assemble into an outermost layer of rodlet bundles on aerial cell surfaces, conferring cellular hydrophobicity that supports fungal growth, development and dispersal; whereas Class II form highly ordered films at water-air interfaces through intermolecular interactions but contribute nothing to the rodlet structure. TH1 is a class II hydrophobin that reduces water surface tension dramatically upon assembly at the water-air interface and plays a role in the formation of aerial hyphae. The sequence is that of Class II hydrophobin TH1 (TH1) from Claviceps fusiformis (Ergot fungus).